The following is a 199-amino-acid chain: Recombination protein RecR (199 aa).

Residues 56 to 71 form a C4-type zinc finger; that stretch reads CQRCNTFTEGDICERC. The region spanning 79-174 is the Toprim domain; that stretch reads ELLCVVETPV…GVTRIARGVP (96 aa).

The protein belongs to the RecR family.

Functionally, may play a role in DNA repair. It seems to be involved in an RecBC-independent recombinational process of DNA repair. It may act with RecF and RecO. This Dechloromonas aromatica (strain RCB) protein is Recombination protein RecR.